Reading from the N-terminus, the 107-residue chain is IQ domain-containing protein F6 (107 aa).

The IQ domain maps to 42-71 (QEWAVVKVQAQVRMWQARRRFLQARQAACI).

The sequence is that of IQ domain-containing protein F6 (IQCF6) from Homo sapiens (Human).